We begin with the raw amino-acid sequence, 477 residues long: Bifunctional protein HldE (477 aa).

Residues 1 to 318 (MKVTLPEFER…ENAVRGRAET (318 aa)) form a ribokinase region. 195–198 (NLSE) serves as a coordination point for ATP. Residue Asp-264 is part of the active site. The cytidylyltransferase stretch occupies residues 344 to 477 (MTNGVFDILH…IKKIQKDSDK (134 aa)).

It in the N-terminal section; belongs to the carbohydrate kinase PfkB family. In the C-terminal section; belongs to the cytidylyltransferase family. In terms of assembly, homodimer.

It carries out the reaction D-glycero-beta-D-manno-heptose 7-phosphate + ATP = D-glycero-beta-D-manno-heptose 1,7-bisphosphate + ADP + H(+). The enzyme catalyses D-glycero-beta-D-manno-heptose 1-phosphate + ATP + H(+) = ADP-D-glycero-beta-D-manno-heptose + diphosphate. The protein operates within nucleotide-sugar biosynthesis; ADP-L-glycero-beta-D-manno-heptose biosynthesis; ADP-L-glycero-beta-D-manno-heptose from D-glycero-beta-D-manno-heptose 7-phosphate: step 1/4. It participates in nucleotide-sugar biosynthesis; ADP-L-glycero-beta-D-manno-heptose biosynthesis; ADP-L-glycero-beta-D-manno-heptose from D-glycero-beta-D-manno-heptose 7-phosphate: step 3/4. Functionally, catalyzes the phosphorylation of D-glycero-D-manno-heptose 7-phosphate at the C-1 position to selectively form D-glycero-beta-D-manno-heptose-1,7-bisphosphate. Catalyzes the ADP transfer from ATP to D-glycero-beta-D-manno-heptose 1-phosphate, yielding ADP-D-glycero-beta-D-manno-heptose. The protein is Bifunctional protein HldE of Klebsiella pneumoniae subsp. pneumoniae (strain ATCC 700721 / MGH 78578).